The sequence spans 233 residues: 5-demethoxyubiquinone hydroxylase, mitochondrial (233 aa).

The transit peptide at Met1–Phe15 directs the protein to the mitochondrion. Residues Ser20 and Ser28 each carry the phosphoserine modification. The residue at position 32 (Thr32) is a Phosphothreonine. Fe cation is bound by residues Glu63, Glu95, His98, Glu147, Glu194, and His197.

The protein belongs to the COQ7 family. In terms of assembly, component of a multi-subunit COQ enzyme complex, composed of at least COQ3, COQ4, COQ5, COQ6, COQ7 and COQ9. The cofactor is Fe cation. Post-translationally, phosphorylated. Dephosphorylated by PTC7; dephosphorylation is essential for enzyme activation.

It localises to the mitochondrion inner membrane. It catalyses the reaction a 5-methoxy-2-methyl-3-(all-trans-polyprenyl)benzene-1,4-diol + AH2 + O2 = a 3-demethylubiquinol + A + H2O. It carries out the reaction a 5-methoxy-2-methyl-3-(all-trans-polyprenyl)benzoquinone + NADH + O2 = a 3-demethylubiquinone + NAD(+) + H2O. The protein operates within cofactor biosynthesis; ubiquinone biosynthesis. With respect to regulation, dephosphorylation by PTC7 leads to activation. Its function is as follows. Catalyzes the hydroxylation of 2-hexaprenyl-3-methyl-6-methoxy-1,4-benzoquinol (DMQH2) during ubiquinone biosynthesis. Also catalyzes the hydroxylation of the 5-methoxy-2-methyl-3-(all-trans-polyprenyl)benzoquinone at the C6 position and participates in the biosynthesis of ubiquinone. Also has a structural role in the COQ enzyme complex, stabilizing COQ3 and COQ4 polypeptides. This is 5-demethoxyubiquinone hydroxylase, mitochondrial from Saccharomyces cerevisiae (strain ATCC 204508 / S288c) (Baker's yeast).